The chain runs to 395 residues: Phosphoglycerate kinase (395 aa).

Residues 21–23 (DFN), Arg-36, 59–62 (HLGR), Arg-120, and Arg-153 each bind substrate. Residues Lys-203, Glu-325, and 351–354 (GGDS) each bind ATP.

It belongs to the phosphoglycerate kinase family. In terms of assembly, monomer.

It is found in the cytoplasm. The catalysed reaction is (2R)-3-phosphoglycerate + ATP = (2R)-3-phospho-glyceroyl phosphate + ADP. Its pathway is carbohydrate degradation; glycolysis; pyruvate from D-glyceraldehyde 3-phosphate: step 2/5. This is Phosphoglycerate kinase from Roseiflexus castenholzii (strain DSM 13941 / HLO8).